We begin with the raw amino-acid sequence, 306 residues long: UDP-N-acetylenolpyruvoylglucosamine reductase (306 aa).

Residues 34-198 (VGGPADLLIT…LEVTFKLHNS (165 aa)) form the FAD-binding PCMH-type domain. Arginine 177 is a catalytic residue. Catalysis depends on serine 227, which acts as the Proton donor. Glutamate 297 is an active-site residue.

Belongs to the MurB family. It depends on FAD as a cofactor.

It is found in the cytoplasm. The catalysed reaction is UDP-N-acetyl-alpha-D-muramate + NADP(+) = UDP-N-acetyl-3-O-(1-carboxyvinyl)-alpha-D-glucosamine + NADPH + H(+). Its pathway is cell wall biogenesis; peptidoglycan biosynthesis. In terms of biological role, cell wall formation. In Clostridium botulinum (strain Okra / Type B1), this protein is UDP-N-acetylenolpyruvoylglucosamine reductase.